We begin with the raw amino-acid sequence, 390 residues long: Guanidine hydrolase (390 aa).

The Ni(2+) site is built by His174, Asp199, His201, Asp203, Asp291, and Asp293.

It belongs to the arginase family. As to quaternary structure, homohexamer. The cofactor is Ni(2+).

It is found in the cytoplasm. It carries out the reaction guanidine + H2O = urea + NH4(+). Its activity is regulated as follows. Activation of GdmH depends on the presence of the accessory proteins GhaA (Sll1078) and GhaB (Sll1079), which load nickel into the active site. Hydrolase activity is slightly activated in the presence of GTP. It does not require ATP or NAD(P)H. Addition of Ca(2+), Mn(2+), Fe(2+) or Fe(3+) has no consistent effects, whereas addition of Co(2+), Cu(2+) or Zn(2+) inhibits the activity. In terms of biological role, catalyzes the hydrolysis of guanidine into urea and ammonium. Is highly specific for free guanidine. At pH 8, also catalyzes the release of urea from methylguanidine but with significantly reduced specific activity compared with that for guanidine. Cannot hydrolyze guanidinoacetate, guanidinopropionate, guanidinobutyrate, agmatine, arginine or creatine. Required to use guanidine as the sole nitrogen source for growth. Overexpression of the gene accelerates guanidine degradation and promotes biomass growth. The protein is Guanidine hydrolase of Synechocystis sp. (strain ATCC 27184 / PCC 6803 / Kazusa).